A 569-amino-acid polypeptide reads, in one-letter code: Endonuclease/exonuclease/phosphatase family domain-containing protein 1 (569 aa).

The N-myristoyl glycine moiety is linked to residue G2. 2 positions are modified to phosphoserine: S16 and S25. The region spanning 38–67 (ERLNINTATEEELMTLPGVTRAVARSIVEY) is the HhH domain. 4 positions are modified to phosphoserine: S106, S110, S160, and S173. Positions 200–224 (SRPPSTHTNGGLTFTAKPHPSPTSL) are disordered. Residues 202-211 (PPSTHTNGGL) are compositionally biased toward polar residues. T265 bears the Phosphothreonine mark. Residues 549-569 (VPRNGNGVTLEPSEANIKHER) are disordered.

This Mus musculus (Mouse) protein is Endonuclease/exonuclease/phosphatase family domain-containing protein 1 (Eepd1).